The chain runs to 488 residues: Probable multidrug resistance protein NorM (488 aa).

The next 12 helical transmembrane spans lie at 11–31 (AILR…AMVF), 55–75 (YAFV…LVAI), 97–117 (AALA…LLVF), 127–147 (AMQF…FMVL), 159–179 (PVMA…YSFI), 190–210 (LAGI…LLAL), 247–267 (GTYA…GIIG), 271–291 (LAAH…PVGL), 317–337 (VGIG…WWMP), 355–375 (VAAM…FDGT), 393–413 (FLVG…LLAF), and 421–441 (GVWW…TLAF).

This sequence belongs to the multi antimicrobial extrusion (MATE) (TC 2.A.66.1) family.

It localises to the cell inner membrane. In terms of biological role, multidrug efflux pump. The sequence is that of Probable multidrug resistance protein NorM (norM) from Pseudomonas aeruginosa (strain ATCC 15692 / DSM 22644 / CIP 104116 / JCM 14847 / LMG 12228 / 1C / PRS 101 / PAO1).